A 256-amino-acid polypeptide reads, in one-letter code: Phosphate import ATP-binding protein PstB (256 aa).

The region spanning 10 to 251 (IRTVNVNFYY…PEQKQTEDYI (242 aa)) is the ABC transporter domain. 42–49 (GPSGCGKS) lines the ATP pocket.

The protein belongs to the ABC transporter superfamily. Phosphate importer (TC 3.A.1.7) family. In terms of assembly, the complex is composed of two ATP-binding proteins (PstB), two transmembrane proteins (PstC and PstA) and a solute-binding protein (PstS).

Its subcellular location is the cell inner membrane. The enzyme catalyses phosphate(out) + ATP + H2O = ADP + 2 phosphate(in) + H(+). Its function is as follows. Part of the ABC transporter complex PstSACB involved in phosphate import. Responsible for energy coupling to the transport system. The polypeptide is Phosphate import ATP-binding protein PstB (Syntrophus aciditrophicus (strain SB)).